The following is a 115-amino-acid chain: Probable non-functional T cell receptor beta variable 7-3 (115 aa).

A signal peptide spans 1–21; it reads MGTRLLCWAALCLLGADHTGA. The region spanning 22–115 is the Ig-like domain; the sequence is GVSQTPSNKV…SAAYLRASSL (94 aa).

In terms of assembly, most probably, the alpha-beta TR is not assembled due to incorrect folding of the beta chain. Alpha-beta TR is a heterodimer composed of an alpha and beta chain; disulfide-linked. The alpha-beta TR is associated with the transmembrane signaling CD3 coreceptor proteins to form the TR-CD3 (TcR or TCR). The assembly of alpha-beta TR heterodimers with CD3 occurs in the endoplasmic reticulum where a single alpha-beta TR heterodimer associates with one CD3D-CD3E heterodimer, one CD3G-CD3E heterodimer and one CD247 homodimer forming a stable octameric structure. CD3D-CD3E and CD3G-CD3E heterodimers preferentially associate with TR alpha and TR beta chains, respectively. The association of the CD247 homodimer is the last step of TcR assembly in the endoplasmic reticulum and is required for transport to the cell surface.

The protein resides in the cell membrane. Probable non-functional open reading frame (ORF) of V region of the variable domain of T cell receptor (TR) beta chain. Non-functional ORF generally cannot participate in the synthesis of a productive T cell receptor (TR) chain due to altered V-(D)-J or switch recombination and/or splicing site (at mRNA level) and/or conserved amino acid change (protein level). Alpha-beta T cell receptors are antigen specific receptors which are essential to the immune response and are present on the cell surface of T lymphocytes. Recognize peptide-major histocompatibility (MH) (pMH) complexes that are displayed by antigen presenting cells (APC), a prerequisite for efficient T cell adaptive immunity against pathogens. Binding of alpha-beta TR to pMH complex initiates TR-CD3 clustering on the cell surface and intracellular activation of LCK that phosphorylates the ITAM motifs of CD3G, CD3D, CD3E and CD247 enabling the recruitment of ZAP70. In turn ZAP70 phosphorylates LAT, which recruits numerous signaling molecules to form the LAT signalosome. The LAT signalosome propagates signal branching to three major signaling pathways, the calcium, the mitogen-activated protein kinase (MAPK) kinase and the nuclear factor NF-kappa-B (NF-kB) pathways, leading to the mobilization of transcription factors that are critical for gene expression and essential for T cell growth and differentiation. The T cell repertoire is generated in the thymus, by V-(D)-J rearrangement. This repertoire is then shaped by intrathymic selection events to generate a peripheral T cell pool of self-MH restricted, non-autoaggressive T cells. Post-thymic interaction of alpha-beta TR with the pMH complexes shapes TR structural and functional avidity. The protein is Probable non-functional T cell receptor beta variable 7-3 of Homo sapiens (Human).